A 405-amino-acid chain; its full sequence is Glucose-1-phosphate adenylyltransferase (405 aa).

Residues Gly164, 179–180 (EK), and Ser197 each bind alpha-D-glucose 1-phosphate.

Belongs to the bacterial/plant glucose-1-phosphate adenylyltransferase family. Homotetramer.

The catalysed reaction is alpha-D-glucose 1-phosphate + ATP + H(+) = ADP-alpha-D-glucose + diphosphate. Its pathway is glycan biosynthesis; glycogen biosynthesis. Its function is as follows. Involved in the biosynthesis of ADP-glucose, a building block required for the elongation reactions to produce glycogen. Catalyzes the reaction between ATP and alpha-D-glucose 1-phosphate (G1P) to produce pyrophosphate and ADP-Glc. The chain is Glucose-1-phosphate adenylyltransferase from Corynebacterium jeikeium (strain K411).